The following is a 470-amino-acid chain: Histone deacetylase HOS1 (470 aa).

The tract at residues 47–392 (LTFPYARKDD…YTYLTWCVTK (346 aa)) is histone deacetylase. The residue at position 110 (Ser110) is a Phosphoserine. The active site involves His211.

This sequence belongs to the histone deacetylase family. HD type 1 subfamily.

It is found in the nucleus. It catalyses the reaction N(6)-acetyl-L-lysyl-[histone] + H2O = L-lysyl-[histone] + acetate. Functionally, responsible for the deacetylation of lysine residues on the N-terminal part of the core histones (H2A, H2B, H3 and H4). Histone deacetylation plays an important role in transcriptional regulation, cell cycle progression and developmental events. Histone deacetylases act via the formation of large multiprotein complexes. The chain is Histone deacetylase HOS1 (HOS1) from Saccharomyces cerevisiae (strain ATCC 204508 / S288c) (Baker's yeast).